The primary structure comprises 148 residues: uncharacterized protein (148 aa).

Residues 3–64 (IDDLDRKILS…KLNYEKLGYE (62 aa)) form the HTH asnC-type domain. The segment at residues 22 to 41 (YREIAKKLNVAVGTIYNRIK) is a DNA-binding region (H-T-H motif).

This is an uncharacterized protein from Pyrococcus furiosus (strain ATCC 43587 / DSM 3638 / JCM 8422 / Vc1).